The chain runs to 110 residues: Large ribosomal subunit protein uL22 (110 aa).

It belongs to the universal ribosomal protein uL22 family. In terms of assembly, part of the 50S ribosomal subunit.

This protein binds specifically to 23S rRNA; its binding is stimulated by other ribosomal proteins, e.g. L4, L17, and L20. It is important during the early stages of 50S assembly. It makes multiple contacts with different domains of the 23S rRNA in the assembled 50S subunit and ribosome. In terms of biological role, the globular domain of the protein is located near the polypeptide exit tunnel on the outside of the subunit, while an extended beta-hairpin is found that lines the wall of the exit tunnel in the center of the 70S ribosome. The polypeptide is Large ribosomal subunit protein uL22 (Histophilus somni (strain 129Pt) (Haemophilus somnus)).